Consider the following 70-residue polypeptide: Mu-conotoxin PnIVB (70 aa).

An N-terminal signal peptide occupies residues 1–20 (MMSKLGVLLIICLLLCPLTA). Positions 21–51 (VPQDGDQPADQPAERMQDDISSEHHPFFDPV) are excised as a propeptide.

Contains 3 disulfide bonds. They are not added, since framework IV presents two different connectivities (I-V, II-III, IV-VI and I-III, II-V, IV-VI). As to expression, expressed by the venom duct.

The protein localises to the secreted. Its function is as follows. Mu-conotoxins block voltage-gated sodium channels (Nav). Blocks reversibly sodium channels in molluskan neurons, but has no effect on sodium currents in bovine chromaffin cells or in rat brain synaptosomes. Induces paralysis in bivalve mollusks (Mytilus). No effect are observed on fish (Gambusia) and fly larvae (Sarcophaga). Is approximately 6 times more potent than PnIVA in blockade of the sodium current in Lymnaea neurons. This Conus pennaceus (Feathered cone) protein is Mu-conotoxin PnIVB.